We begin with the raw amino-acid sequence, 135 residues long: ATP synthase epsilon chain (135 aa).

It belongs to the ATPase epsilon chain family. In terms of assembly, F-type ATPases have 2 components, CF(1) - the catalytic core - and CF(0) - the membrane proton channel. CF(1) has five subunits: alpha(3), beta(3), gamma(1), delta(1), epsilon(1). CF(0) has three main subunits: a, b and c.

It localises to the cell inner membrane. In terms of biological role, produces ATP from ADP in the presence of a proton gradient across the membrane. The polypeptide is ATP synthase epsilon chain (Rhizobium etli (strain CIAT 652)).